A 224-amino-acid polypeptide reads, in one-letter code: Putative MgpC-like protein MPN_150 (224 aa).

Belongs to the MgpC family.

This is Putative MgpC-like protein MPN_150 from Mycoplasma pneumoniae (strain ATCC 29342 / M129 / Subtype 1) (Mycoplasmoides pneumoniae).